Here is a 269-residue protein sequence, read N- to C-terminus: Tryptophan synthase alpha chain (269 aa).

Catalysis depends on proton acceptor residues Glu-49 and Asp-60.

It belongs to the TrpA family. In terms of assembly, tetramer of two alpha and two beta chains.

The enzyme catalyses (1S,2R)-1-C-(indol-3-yl)glycerol 3-phosphate + L-serine = D-glyceraldehyde 3-phosphate + L-tryptophan + H2O. It functions in the pathway amino-acid biosynthesis; L-tryptophan biosynthesis; L-tryptophan from chorismate: step 5/5. The alpha subunit is responsible for the aldol cleavage of indoleglycerol phosphate to indole and glyceraldehyde 3-phosphate. This chain is Tryptophan synthase alpha chain, found in Ectopseudomonas mendocina (strain ymp) (Pseudomonas mendocina).